The sequence spans 60 residues: Probable tautomerase SP_1017 (60 aa).

Proline 2 (proton acceptor; via imino nitrogen) is an active-site residue.

It belongs to the 4-oxalocrotonate tautomerase family.

In Streptococcus pneumoniae serotype 4 (strain ATCC BAA-334 / TIGR4), this protein is Probable tautomerase SP_1017.